Consider the following 893-residue polypeptide: DNA mismatch repair protein MutS (893 aa).

637-644 serves as a coordination point for ATP; it reads GPNMGGKS.

This sequence belongs to the DNA mismatch repair MutS family.

This protein is involved in the repair of mismatches in DNA. It is possible that it carries out the mismatch recognition step. This protein has a weak ATPase activity. This is DNA mismatch repair protein MutS from Burkholderia thailandensis (strain ATCC 700388 / DSM 13276 / CCUG 48851 / CIP 106301 / E264).